The following is a 112-amino-acid chain: Large ribosomal subunit protein P1w (112 aa).

The interval 85–112 (AAAPAAEEKKKDEPAEESDGDLGFGLFD) is disordered. At serine 102 the chain carries Phosphoserine.

The protein belongs to the eukaryotic ribosomal protein P1/P2 family. As to quaternary structure, P1 and P2 exist as dimers at the large ribosomal subunit.

Plays an important role in the elongation step of protein synthesis. This chain is Large ribosomal subunit protein P1w (RPP1A), found in Arabidopsis thaliana (Mouse-ear cress).